The primary structure comprises 353 residues: Aromatic amino acid aminotransferase (353 aa).

Lys-217 is subject to N6-(pyridoxal phosphate)lysine.

Belongs to the class-II pyridoxal-phosphate-dependent aminotransferase family. Homodimer. The cofactor is pyridoxal 5'-phosphate.

It carries out the reaction an aromatic L-alpha-amino acid + 2-oxoglutarate = an aromatic oxo-acid + L-glutamate. Aminotransferase that catalyzes the conversion of aromatic amino acids and 2-oxoglutarate into corresponding aromatic oxo acids and L-glutamate. In Mycobacterium tuberculosis (strain ATCC 25177 / H37Ra), this protein is Aromatic amino acid aminotransferase.